Consider the following 250-residue polypeptide: Hemocyanin, units C and D (250 aa).

His-1 is a binding site for Cu cation. A unit C region spans residues His-1–Ala-106. A disulfide bridge connects residues Cys-7 and Cys-18. The 2'-(S-cysteinyl)-histidine (Cys-His) cross-link spans Cys-19–His-21. Positions 21 and 143 each coordinate Cu cation. The unit D stretch occupies residues Val-107–His-250. Cys-149 and Cys-160 are disulfide-bonded. A cross-link (2'-(S-cysteinyl)-histidine (Cys-His)) is located at residues Cys-161–His-163. His-172 serves as a coordination point for Cu cation.

It belongs to the tyrosinase family. Hemocyanin subfamily. As to quaternary structure, decamers of large identical subunits (390 kDa), each containing 8 globular oxygen-binding functional units. It depends on Cu(2+) as a cofactor.

Hemocyanins are copper-containing oxygen carriers occurring freely dissolved in the hemolymph of many mollusks and arthropods. This is Hemocyanin, units C and D from Sepia officinalis (Common cuttlefish).